The following is a 147-amino-acid chain: Small ribosomal subunit protein uS5 (147 aa).

The S5 DRBM domain occupies 9–72 (FQEVVVNIGR…DDAFKNLIHV (64 aa)).

It belongs to the universal ribosomal protein uS5 family. Part of the 30S ribosomal subunit. Contacts proteins S4 and S8.

Its function is as follows. With S4 and S12 plays an important role in translational accuracy. In terms of biological role, located at the back of the 30S subunit body where it stabilizes the conformation of the head with respect to the body. This is Small ribosomal subunit protein uS5 from Helicobacter pylori (strain J99 / ATCC 700824) (Campylobacter pylori J99).